Reading from the N-terminus, the 493-residue chain is Cytoplasmic tRNA 2-thiolation protein 2 (493 aa).

Serine 489 bears the Phosphoserine mark.

The protein belongs to the CTU2/NCS2 family. Interacts with NCS6 and URM1. May act by forming a heterodimer with NCS6.

Its subcellular location is the cytoplasm. The protein operates within tRNA modification; 5-methoxycarbonylmethyl-2-thiouridine-tRNA biosynthesis. Functionally, plays a central role in 2-thiolation of mcm(5)S(2)U at tRNA wobble positions of tRNA(Lys), tRNA(Glu) and tRNA(Gln). May act by forming a heterodimer with NCS6 that ligates sulfur from thiocarboxylated URM1 onto the uridine of tRNAs at wobble position. Prior mcm(5) tRNA modification by the elongator complex is required for 2-thiolation. May also be involved in protein urmylation and in invasive and pseudohyphal growth. Inhibits replication of Brome mosaic virus. The chain is Cytoplasmic tRNA 2-thiolation protein 2 from Saccharomyces cerevisiae (strain ATCC 204508 / S288c) (Baker's yeast).